Here is a 345-residue protein sequence, read N- to C-terminus: Delta(1)-pyrroline-2-carboxylate reductase (345 aa).

Ser-47 serves as the catalytic Charge relay system. The active-site Proton donor is the His-48. Arg-52 contacts substrate. Residue 121 to 125 (HFSAL) coordinates NADP(+). Thr-161 serves as a coordination point for substrate. 179–181 (DFA) contributes to the NADP(+) binding site. 187 to 188 (RG) is a substrate binding site. Glu-189 acts as the Charge relay system in catalysis. NADP(+)-binding positions include 230-231 (HK) and 305-311 (RLPSGRR).

Belongs to the LDH2/MDH2 oxidoreductase family. As to quaternary structure, homodimer.

It catalyses the reaction L-proline + NAD(+) = 1-pyrroline-2-carboxylate + NADH + H(+). The catalysed reaction is L-proline + NADP(+) = 1-pyrroline-2-carboxylate + NADPH + H(+). Functionally, catalyzes the reduction of Delta(1)-pyrroline-2-carboxylate (Pyr2C) to L-proline, using NADPH as the electron donor. Is likely involved in a degradation pathway that converts trans-3-hydroxy-L-proline (t3LHyp) to L-proline, which would allow A.tumefaciens to grow on t3LHyp as a sole carbon source. The polypeptide is Delta(1)-pyrroline-2-carboxylate reductase (Agrobacterium fabrum (strain C58 / ATCC 33970) (Agrobacterium tumefaciens (strain C58))).